The primary structure comprises 85 residues: Follicular dendritic cell secreted peptide (85 aa).

The first 17 residues, 1–17, serve as a signal peptide directing secretion; it reads MKKVLLLITAILAVAVG. An O-glycosylated at one site region spans residues 75–83; the sequence is SAPTTPLPS.

In terms of processing, O-glycosylated with core 1 or possibly core 8 glycans. Abundantly expressed in tonsil, lymph node, and trachea; strong expression in prostate; lower expression in thyroid, stomach, and colon.

Its subcellular location is the secreted. Functionally, can bind to the surface of B-lymphoma cells, but not T-lymphoma cells, consistent with a function as a secreted mediator acting upon B-cells. The polypeptide is Follicular dendritic cell secreted peptide (FDCSP) (Homo sapiens (Human)).